Here is a 162-residue protein sequence, read N- to C-terminus: Caveolin-2 (162 aa).

Residues 1 to 86 (MGLETEKADV…FEISKYVMYK (86 aa)) lie on the Cytoplasmic side of the membrane. Phosphotyrosine; by SRC is present on Tyr19. Ser20 and Ser23 each carry phosphoserine. Tyr27 carries the phosphotyrosine; by SRC modification. Ser36 carries the phosphoserine modification. The segment at residues 87-107 (FLTVFLAIPLAFIAGILFATL) is an intramembrane region (helical). Over 108–162 (SCLHIWILMPFVKTCLMVLPSVQTIWKSVTDVFIAPLCTSIGRSFSSVSLQLSQD) the chain is Cytoplasmic.

Belongs to the caveolin family. Monomer or homodimer. Interacts with CAV1; the interaction forms a stable heterooligomeric complex that is required for targeting to lipid rafts and for caveolae formation. Tyrosine phosphorylated forms do not form heterooligomers with the Tyr-19-phosphorylated form existing as a monomer or dimer, and the Tyr-27-form as a monomer only. Interacts (tyrosine phosphorylated form) with the SH2 domain-containing proteins, RASA1, NCK1 and SRC. Interacts (tyrosine phosphorylated form) with INSR, the interaction (Tyr-27-phosphorylated form) is increased on insulin stimulation. Interacts (Tyr-19 phosphorylated form) with MAPK1 (phosphorylated form); the interaction, promoted by insulin, leads to nuclear location and MAPK1 activation. Interacts with STAT3; the interaction is increased on insulin-induced tyrosine phosphorylation leading to STAT activation. Phosphorylated on serine and tyrosine residues. CAV1 promotes phosphorylation on Ser-23 which then targets the complex to the plasma membrane, lipid rafts and caveolae. Phosphorylation on Ser-36 appears to modulate mitosis in endothelial cells. Phosphorylation on both Tyr-19 and Tyr-27 is required for insulin-induced 'Ser-727' phosphorylation of STAT3 and its activation. Phosphorylation on Tyr-19 is required for insulin-induced phosphorylation of MAPK1 and DNA binding of STAT3. Tyrosine phosphorylation is induced by both EGF and insulin (By. similarity).

It is found in the nucleus. The protein resides in the cytoplasm. Its subcellular location is the golgi apparatus membrane. It localises to the cell membrane. The protein localises to the membrane. It is found in the caveola. In terms of biological role, may act as a scaffolding protein within caveolar membranes. Interacts directly with G-protein alpha subunits and can functionally regulate their activity. Acts as an accessory protein in conjunction with CAV1 in targeting to lipid rafts and driving caveolae formation. The Ser-36 phosphorylated form has a role in modulating mitosis in endothelial cells. Positive regulator of cellular mitogenesis of the MAPK signaling pathway. Required for the insulin-stimulated nuclear translocation and activation of MAPK1 and STAT3, and the subsequent regulation of cell cycle progression. The polypeptide is Caveolin-2 (CAV2) (Papio anubis (Olive baboon)).